We begin with the raw amino-acid sequence, 217 residues long: MHTVKLLCVVFSCLCAIGWASHHSHRQPCHSPQLTSGTMKVVSTGGHDLASGEFSYDSKTNKFRFVEDTTHANKTSYMDVLIHFEEGVLYEIDSKNESCKKETLQFRKHLMEIPVDATHESESYMGSPSLTEQGLRVRVWNGKFPELHAHYSLSTTSCGCLTVSGSYYGEKKDLFFSFFGVETEVDDLQVFAPPAYCEGVSFEEAPDDHSFFDLFHD.

Residues 1–20 form the signal peptide; the sequence is MHTVKLLCVVFSCLCAIGWA. 2 N-linked (GlcNAc...) asparagine glycosylation sites follow: Asn-73 and Asn-96.

It belongs to the ependymin family. As to quaternary structure, forms disulfide-linked dimers. In terms of processing, binds calcium through the terminal sialic acids. EPDs are synthesized in the meninx and secreted in the cerebrospinal fluid.

Its subcellular location is the secreted. Its function is as follows. May play a role in neural plasticity. May be involved during axon regeneration. In Danio rerio (Zebrafish), this protein is Ependymin (epd).